Here is a 414-residue protein sequence, read N- to C-terminus: MIEVLLVTICLAVFPYQGSSIILESGNVNDYEVVYPRKVTALPKGAVQPKYEDAMQYELKVNGEPVVLHLEKNKELFSKDYSETHYSPDGRKITTNPSVEDHCYYRGRIENDADSTASISACNGLKGHFKLQGEMYLIEPLELSDSEAHAVFKLENVEKEDEAPKMCGVTQNWESYEPIKKASDLNLNPDQQNLPQRYIELVVVADHRVFMKYNSDLNTIRTRVHEIVNFINGFYRSLNIHVSLTDLEIWSNEDQINIQSASSDTLNAFAEWRETDLLNRKSHDNAQLLTAIELDEETLGLAPLGTMCDPKLSIGIVQDHSPINLLMGVTMAHELGHNLGMEHDGKDCLRGASLCIMRPGLTKGRSYEFSDDSMHYYERFLKQYKPQCILNKPLRIDPVSTPVSGNELLEAGEE.

An N-terminal signal peptide occupies residues 1-20; the sequence is MIEVLLVTICLAVFPYQGSS. The propeptide occupies 21–190; it reads IILESGNVND…KASDLNLNPD (170 aa). Glutamine 191 is subject to Pyrrolidone carboxylic acid. One can recognise a Peptidase M12B domain in the interval 197–393; that stretch reads RYIELVVVAD…YKPQCILNKP (197 aa). The Ca(2+) site is built by glutamate 200 and aspartate 284. 2 cysteine pairs are disulfide-bonded: cysteine 308–cysteine 388 and cysteine 348–cysteine 355. Residue histidine 333 participates in Zn(2+) binding. Glutamate 334 is a catalytic residue. Zn(2+) contacts are provided by histidine 337 and histidine 343. Residues cysteine 388 and asparagine 391 each contribute to the Ca(2+) site. Positions 394–414 are excised as a propeptide; it reads LRIDPVSTPVSGNELLEAGEE.

This sequence belongs to the venom metalloproteinase (M12B) family. P-I subfamily. Monomer. It depends on Zn(2+) as a cofactor. Post-translationally, the N-terminus is blocked. Expressed by the venom gland.

It is found in the secreted. The enzyme catalyses Cleavage of 5-His-|-Leu-6, 10-His-|-Leu-11, 14-Ala-|-Leu-15, 16-Tyr-|-Leu-17 and 23-Gly-|-Phe-24 of insulin B chain. With small molecule substrates prefers hydrophobic residue at P2' and small residue such as Ala, Gly at P1.. Functionally, snake venom zinc metalloproteinase that causes hemorrhage by provoking the degradation of the sub-endothelial matrix proteins (fibronectin, laminin, type IV collagen, nidogen, and gelatins). The sequence is that of Snake venom metalloproteinase atrolysin-D from Crotalus atrox (Western diamondback rattlesnake).